Here is a 326-residue protein sequence, read N- to C-terminus: Transcription cofactor vestigial-like protein 3 (326 aa).

The tract at residues S54 to A82 is disordered. Residue K62 forms a Glycyl lysine isopeptide (Lys-Gly) (interchain with G-Cter in SUMO2) linkage. A compositionally biased stretch (acidic residues) spans E64–K78. A Glycyl lysine isopeptide (Lys-Gly) (interchain with G-Cter in SUMO2) cross-link involves residue K129. The interval T184–E208 is disordered.

It belongs to the vestigial family.

Its subcellular location is the nucleus. In terms of biological role, may act as a specific coactivator for the mammalian TEFs. The sequence is that of Transcription cofactor vestigial-like protein 3 from Mus musculus (Mouse).